Reading from the N-terminus, the 65-residue chain is Gene 51 protein (65 aa).

The sequence is that of Gene 51 protein (51) from Mycobacterium phage D29 (Mycobacteriophage D29).